We begin with the raw amino-acid sequence, 351 residues long: sn-1 oleoyl-lipid 12-desaturase (351 aa).

The next 2 helical transmembrane spans lie at Trp-46–Leu-66 and Trp-68–Val-88. Residues His-90–His-94 carry the Histidine box-1 motif. A helical membrane pass occupies residues Trp-102–Trp-122. The Histidine box-2 motif lies at His-126–His-130. 2 helical membrane passes run Ile-199–Val-219 and Phe-222–Ile-242. Positions His-290–Val-294 match the Histidine box-3 motif.

Belongs to the fatty acid desaturase type 2 family. Requires Fe(2+) as cofactor.

The protein resides in the membrane. It carries out the reaction a 1-[(9Z)-octadecenoyl]-2-acyl-glycerolipid + 2 reduced [2Fe-2S]-[ferredoxin] + O2 + 2 H(+) = a 1-[(9Z,12Z)-octadecdienoyl]-2-acyl-glycerolipid + 2 oxidized [2Fe-2S]-[ferredoxin] + 2 H2O. The protein operates within lipid metabolism; polyunsaturated fatty acid biosynthesis. In terms of biological role, desaturase involved in fatty acid biosynthesis. Introduces a double bond at carbon 12 of oleoyl groups (18:1) attached to the sn-1 position of the glycerol moiety of membrane glycerolipids. This enzyme is involved in chilling tolerance because the phase transition temperature of lipids of cellular membranes depends on the degree of unsaturation of fatty acids of the membrane lipids. The sequence is that of sn-1 oleoyl-lipid 12-desaturase from Synechocystis sp. (strain ATCC 27184 / PCC 6803 / Kazusa).